We begin with the raw amino-acid sequence, 236 residues long: Leucyl/phenylalanyl-tRNA--protein transferase (236 aa).

The protein belongs to the L/F-transferase family.

It localises to the cytoplasm. It catalyses the reaction N-terminal L-lysyl-[protein] + L-leucyl-tRNA(Leu) = N-terminal L-leucyl-L-lysyl-[protein] + tRNA(Leu) + H(+). It carries out the reaction N-terminal L-arginyl-[protein] + L-leucyl-tRNA(Leu) = N-terminal L-leucyl-L-arginyl-[protein] + tRNA(Leu) + H(+). The catalysed reaction is L-phenylalanyl-tRNA(Phe) + an N-terminal L-alpha-aminoacyl-[protein] = an N-terminal L-phenylalanyl-L-alpha-aminoacyl-[protein] + tRNA(Phe). Functionally, functions in the N-end rule pathway of protein degradation where it conjugates Leu, Phe and, less efficiently, Met from aminoacyl-tRNAs to the N-termini of proteins containing an N-terminal arginine or lysine. The chain is Leucyl/phenylalanyl-tRNA--protein transferase from Yersinia enterocolitica serotype O:8 / biotype 1B (strain NCTC 13174 / 8081).